Reading from the N-terminus, the 337-residue chain is MAAMAAKLQLSAKSDQSSVRLPRVINLSRDPTTRVSFPRNGSVCSLHTNFSSPHLAKPCAGGGGGGSTGNNGGGSGSGGGGGGFGGSGGEASEESSPWGPIGLFIQGWRSRVAADPQFPFKVLMEEIVGLSACVLGDMASRPNFGLNELDFVFSTLVVGSILNFVLMYMLAPTAATLGSSQTLPGIFRNCPSSHMFEQGSFTVMNRFGTLVYKGMVFASVGLAAGLVGTAISNGLIMLRKKMDPSFETPNKPPPTVLNSLTWATHMGVSANARYQTLNGIEFLLAKVLPPLVFKTSVIVLRCANNVAGGMSFVLLARMTGSQSVEEKTEISEKEKDD.

A chloroplast-targeting transit peptide spans 1–59 (MAAMAAKLQLSAKSDQSSVRLPRVINLSRDPTTRVSFPRNGSVCSLHTNFSSPHLAKPC). A compositionally biased stretch (gly residues) spans 70–89 (NNGGGSGSGGGGGGFGGSGG). Positions 70-96 (NNGGGSGSGGGGGGFGGSGGEASEESS) are disordered. Helical transmembrane passes span 151-171 (FVFS…YMLA) and 216-236 (VFAS…NGLI).

It belongs to the RETICULATA family. In terms of tissue distribution, expressed in root meristem, root vasculature, distal region of young leaf primordia, leaf bundle sheath cells, hydathodes and pollen grains.

The protein resides in the plastid. It localises to the chloroplast membrane. May play a role in leaf development. Required for leaf mesophyll cell division in the early stages of leaf organogenesis. This is Protein RETICULATA-RELATED 3, chloroplastic from Arabidopsis thaliana (Mouse-ear cress).